Reading from the N-terminus, the 428-residue chain is Enolase (428 aa).

Gln-162 is a binding site for (2R)-2-phosphoglycerate. Glu-204 functions as the Proton donor in the catalytic mechanism. Mg(2+) is bound by residues Asp-241, Glu-282, and Asp-309. Positions 334, 363, 364, and 385 each coordinate (2R)-2-phosphoglycerate. Residue Lys-334 is the Proton acceptor of the active site.

This sequence belongs to the enolase family. It depends on Mg(2+) as a cofactor.

It is found in the cytoplasm. The protein localises to the secreted. Its subcellular location is the cell surface. The enzyme catalyses (2R)-2-phosphoglycerate = phosphoenolpyruvate + H2O. It participates in carbohydrate degradation; glycolysis; pyruvate from D-glyceraldehyde 3-phosphate: step 4/5. Its function is as follows. Catalyzes the reversible conversion of 2-phosphoglycerate (2-PG) into phosphoenolpyruvate (PEP). It is essential for the degradation of carbohydrates via glycolysis. This is Enolase from Mycobacterium marinum (strain ATCC BAA-535 / M).